A 191-amino-acid polypeptide reads, in one-letter code: 3-isopropylmalate dehydratase small subunit (191 aa).

The protein belongs to the LeuD family. LeuD type 1 subfamily. As to quaternary structure, heterodimer of LeuC and LeuD.

It carries out the reaction (2R,3S)-3-isopropylmalate = (2S)-2-isopropylmalate. The protein operates within amino-acid biosynthesis; L-leucine biosynthesis; L-leucine from 3-methyl-2-oxobutanoate: step 2/4. Catalyzes the isomerization between 2-isopropylmalate and 3-isopropylmalate, via the formation of 2-isopropylmaleate. The polypeptide is 3-isopropylmalate dehydratase small subunit (Anaeromyxobacter dehalogenans (strain 2CP-1 / ATCC BAA-258)).